A 129-amino-acid chain; its full sequence is NADH-quinone oxidoreductase subunit A (129 aa).

The next 3 helical transmembrane spans lie at 14 to 34 (LAIH…VAAL), 67 to 87 (FLIA…FAWA), and 95 to 115 (WFGL…LVYL).

It belongs to the complex I subunit 3 family. In terms of assembly, NDH-1 is composed of 14 different subunits. Subunits NuoA, H, J, K, L, M, N constitute the membrane sector of the complex.

The protein localises to the cell inner membrane. The catalysed reaction is a quinone + NADH + 5 H(+)(in) = a quinol + NAD(+) + 4 H(+)(out). In terms of biological role, NDH-1 shuttles electrons from NADH, via FMN and iron-sulfur (Fe-S) centers, to quinones in the respiratory chain. The immediate electron acceptor for the enzyme in this species is believed to be ubiquinone. Couples the redox reaction to proton translocation (for every two electrons transferred, four hydrogen ions are translocated across the cytoplasmic membrane), and thus conserves the redox energy in a proton gradient. The sequence is that of NADH-quinone oxidoreductase subunit A from Rhodopseudomonas palustris (strain HaA2).